The following is a 489-amino-acid chain: Serotonin-gated chloride channel mod-1 (489 aa).

The N-terminal stretch at 1 to 20 is a signal peptide; the sequence is MKFIPEITLLLLLFVHSTQA. Residues 21–240 are Extracellular-facing; it reads KGKRRKCPEG…VTFTFKRRYG (220 aa). N-linked (GlcNAc...) asparagine glycans are attached at residues Asn44, Asn103, and Asn144. Residues Tyr180 and Trp226 each contribute to the serotonin site. A run of 3 helical transmembrane segments spans residues 241 to 261, 274 to 294, and 304 to 324; these read FYII…WVSF, VGIS…KNLP, and VWML…AFVC. Topologically, residues 325-458 are cytoplasmic; that stretch reads YISRCQNSVR…ARFHPEAVDK (134 aa). The segment at 365–398 is disordered; that stretch reads GSVISHYHPTSNGNGNNNRHDTPQVTGRGSLHRN. Residues 372–391 are compositionally biased toward polar residues; sequence HPTSNGNGNNNRHDTPQVTG. A helical membrane pass occupies residues 459-479; sequence FSIVAFPLAFTMFNLVYWWHY.

The protein belongs to the ligand-gated ion channel (TC 1.A.9) family. Expressed in a subset of muscles, and head and tail neurons, including RME and GABAergic ventral nerve cord neurons. Expressed in AIY, RME, RID, RIF, ASI, DD1-6, and PVN neurons.

The protein localises to the membrane. Its subcellular location is the cell membrane. Functionally, functions as a 5-hydroxytryptamine (serotonin) receptor. This receptor is a ligand-gated anion-specific ion channel, selective for chloride ions. Relays a long-range endocrine signal from the body cavity neurons to modulate distal adipose triglyceride lipase atgl-1 function, via the nuclear receptor nhr-76. Together with the G-protein coupled serotonin receptor ser-1 involved in male mating behavior. May mediate an inhibitory effect of serotonin on egg laying. Involved in regulating locomotory behavior, perhaps by modulating interneuronal signaling, acting in concert with G-protein coupled serotonin receptor ser-4. In the presence of food, plays a role in initiating and extending dwelling behavior, perhaps acting in AIY, RIF and ASI neurons, in opposition to neuropeptide PDF-mediated signaling. Plays a role in aversive learning upon exposure to pathogens such as Gram-negative bacterium P.aeruginosa strain PA14; perhaps acting in interneurons in response to serotonin released by the serotonergic ADF neurons. The protein is Serotonin-gated chloride channel mod-1 of Caenorhabditis elegans.